We begin with the raw amino-acid sequence, 288 residues long: Elongation factor Ts (288 aa).

The involved in Mg(2+) ion dislocation from EF-Tu stretch occupies residues 79–82 (TDFV).

Belongs to the EF-Ts family.

It localises to the cytoplasm. Associates with the EF-Tu.GDP complex and induces the exchange of GDP to GTP. It remains bound to the aminoacyl-tRNA.EF-Tu.GTP complex up to the GTP hydrolysis stage on the ribosome. In Ehrlichia ruminantium (strain Welgevonden), this protein is Elongation factor Ts.